The sequence spans 1379 residues: Attractin-like protein 1 (1379 aa).

The disordered stretch occupies residues methionine 1–arginine 23. A signal peptide spans methionine 1–alanine 52. Positions leucine 53–glutamine 91 constitute an EGF-like 1 domain. The Extracellular segment spans residues leucine 53–leucine 1230. Intrachain disulfides connect cysteine 63-cysteine 79, cysteine 81-cysteine 90, and cysteine 93-cysteine 119. Asparagine 76 carries an N-linked (GlcNAc...) asparagine glycan. Positions cysteine 93–asparagine 209 constitute a CUB domain. 2 N-linked (GlcNAc...) asparagine glycosylation sites follow: asparagine 174 and asparagine 198. Residues serine 207–aspartate 245 enclose the EGF-like 2 domain. Intrachain disulfides connect cysteine 211–cysteine 221, cysteine 215–cysteine 233, and cysteine 235–cysteine 244. Kelch repeat units lie at residues phenylalanine 316–glutamate 365, isoleucine 367–serine 415, valine 427–aspartate 475, serine 480–glycine 531, methionine 533–glycine 591, and serine 592–asparagine 638. Asparagine 380 is a glycosylation site (N-linked (GlcNAc...) asparagine). PSI domains follow at residues asparagine 614–proline 657, arginine 666–histidine 709, and isoleucine 715–leucine 760. Positions isoleucine 755–glutamate 873 constitute a C-type lectin domain. Residues asparagine 763, asparagine 778, and asparagine 898 are each glycosylated (N-linked (GlcNAc...) asparagine). Cysteines 776 and 872 form a disulfide. PSI domains lie at proline 889–serine 939 and asparagine 942–proline 1012. Cystine bridges form between cysteine 1014/cysteine 1022, cysteine 1016/cysteine 1028, cysteine 1031/cysteine 1040, cysteine 1043/cysteine 1057, cysteine 1060/cysteine 1069, cysteine 1062/cysteine 1076, cysteine 1078/cysteine 1088, and cysteine 1091/cysteine 1106. Laminin EGF-like domains are found at residues cysteine 1014–alanine 1059 and cysteine 1060–tyrosine 1108. The N-linked (GlcNAc...) asparagine glycan is linked to asparagine 1157. The helical transmembrane segment at valine 1231–valine 1251 threads the bilayer. Residues tryptophan 1252 to valine 1379 are Cytoplasmic-facing. The interval lysine 1354–valine 1379 is disordered.

As to quaternary structure, interacts with MC4R.

It localises to the membrane. In terms of biological role, may play a role in melanocortin signaling pathways that regulate energy homeostasis. The protein is Attractin-like protein 1 (ATRNL1) of Homo sapiens (Human).